The primary structure comprises 277 residues: Large ribosomal subunit protein uL2 (277 aa).

The tract at residues 222–277 (GVAMNPVDHPHGGGEGRTSGGRHPVSPWGKPTKGKRTRSNKATDKFIMRSRHQRKK) is disordered.

Belongs to the universal ribosomal protein uL2 family. In terms of assembly, part of the 50S ribosomal subunit. Forms a bridge to the 30S subunit in the 70S ribosome.

In terms of biological role, one of the primary rRNA binding proteins. Required for association of the 30S and 50S subunits to form the 70S ribosome, for tRNA binding and peptide bond formation. It has been suggested to have peptidyltransferase activity; this is somewhat controversial. Makes several contacts with the 16S rRNA in the 70S ribosome. The protein is Large ribosomal subunit protein uL2 of Bartonella bacilliformis (strain ATCC 35685 / KC583 / Herrer 020/F12,63).